The following is a 507-amino-acid chain: Cysteine--tRNA ligase (507 aa).

A Zn(2+)-binding site is contributed by Cys-29. The 'HIGH' region motif lies at 31-41 (PTVYDVPHIGN). Cys-207, His-232, and Glu-236 together coordinate Zn(2+). The 'KMSKS' region signature appears at 265-269 (KMSKS). Lys-268 contacts ATP.

Belongs to the class-I aminoacyl-tRNA synthetase family. Monomer. The cofactor is Zn(2+).

Its subcellular location is the cytoplasm. It catalyses the reaction tRNA(Cys) + L-cysteine + ATP = L-cysteinyl-tRNA(Cys) + AMP + diphosphate. The protein is Cysteine--tRNA ligase of Neorickettsia sennetsu (strain ATCC VR-367 / Miyayama) (Ehrlichia sennetsu).